A 309-amino-acid chain; its full sequence is Ribosomal protein L11 methyltransferase (309 aa).

Residues T144, G165, D187, and N235 each coordinate S-adenosyl-L-methionine.

The protein belongs to the methyltransferase superfamily. PrmA family.

Its subcellular location is the cytoplasm. The catalysed reaction is L-lysyl-[protein] + 3 S-adenosyl-L-methionine = N(6),N(6),N(6)-trimethyl-L-lysyl-[protein] + 3 S-adenosyl-L-homocysteine + 3 H(+). Functionally, methylates ribosomal protein L11. This chain is Ribosomal protein L11 methyltransferase, found in Prochlorococcus marinus (strain MIT 9215).